A 283-amino-acid chain; its full sequence is MIIHHQFDPVLISIGPLAVRWYALSYILGFILFTFLGRRRIAQGLSVFTKESLDDFLTWGILGVILGGRLGYVLFYKFSDYLAHPLDIFKVWEGGMSFHGGFLGVVIAIWLFSRKHGIGFLKLMDTVAPLVPLGLASGRIGNFINGELWGRITDINAFWAMGFPQAHYEDAEAAAHNPLWAEWLQQYGMLPRHPSQLYQFALEGICLFAVVWLFSKKPRPTGQTAALFLGGYGVFRFIAEFARQPDDYLGLLTLGLSMGQWLSVPMIVLGIVGFVRFGMKKQH.

A run of 3 helical transmembrane segments spans residues 17–37, 56–76, and 92–112; these read LAVR…TFLG, FLTW…VLFY, and WEGG…IWLF. An a 1,2-diacyl-sn-glycero-3-phospho-(1'-sn-glycerol)-binding site is contributed by Arg-139. Transmembrane regions (helical) follow at residues 222–242 and 255–275; these read GQTA…AEFA and GLSM…VGFV.

It belongs to the Lgt family.

The protein localises to the cell inner membrane. The enzyme catalyses L-cysteinyl-[prolipoprotein] + a 1,2-diacyl-sn-glycero-3-phospho-(1'-sn-glycerol) = an S-1,2-diacyl-sn-glyceryl-L-cysteinyl-[prolipoprotein] + sn-glycerol 1-phosphate + H(+). It functions in the pathway protein modification; lipoprotein biosynthesis (diacylglyceryl transfer). Its function is as follows. Catalyzes the transfer of the diacylglyceryl group from phosphatidylglycerol to the sulfhydryl group of the N-terminal cysteine of a prolipoprotein, the first step in the formation of mature lipoproteins. The protein is Phosphatidylglycerol--prolipoprotein diacylglyceryl transferase of Neisseria gonorrhoeae (strain ATCC 700825 / FA 1090).